A 122-amino-acid polypeptide reads, in one-letter code: MSSLAQKQVARLKRQTRVRKKITGSPARPRLNVFKSARHIYAQLIDDTTGATLASASTLAGDVAEGLSYTGNAEAAAKVGAAIAKKALEKEITAVVFDRNGFLYHGRIKALADAARENGLSF.

The protein belongs to the universal ribosomal protein uL18 family. As to quaternary structure, part of the 50S ribosomal subunit; part of the 5S rRNA/L5/L18/L25 subcomplex. Contacts the 5S and 23S rRNAs.

This is one of the proteins that bind and probably mediate the attachment of the 5S RNA into the large ribosomal subunit, where it forms part of the central protuberance. The chain is Large ribosomal subunit protein uL18 from Citrifermentans bemidjiense (strain ATCC BAA-1014 / DSM 16622 / JCM 12645 / Bem) (Geobacter bemidjiensis).